The following is a 501-amino-acid chain: 1-aminocyclopropane-1-carboxylate synthase-like protein 1 (501 aa).

Glu105 contributes to the substrate binding site. The residue at position 323 (Lys323) is an N6-(pyridoxal phosphate)lysine. The interval 480–501 is disordered; the sequence is GKSQVAEDPRPSQSQEPSDQRR. The segment covering 490-501 has biased composition (polar residues); that stretch reads PSQSQEPSDQRR.

The protein belongs to the class-I pyridoxal-phosphate-dependent aminotransferase family.

Does not catalyze the synthesis of 1-aminocyclopropane-1-carboxylate but is capable of catalyzing the deamination of L-vinylglycine. In Homo sapiens (Human), this protein is 1-aminocyclopropane-1-carboxylate synthase-like protein 1 (ACCS).